Consider the following 491-residue polypeptide: Acetyl-coenzyme A carboxylase carboxyl transferase subunit beta, chloroplastic (491 aa).

One can recognise a CoA carboxyltransferase N-terminal domain in the interval Leu229 to Thr491. The Zn(2+) site is built by Cys233, Cys236, Cys252, and Cys255. The segment at Cys233–Cys255 adopts a C4-type zinc-finger fold.

Belongs to the AccD/PCCB family. Acetyl-CoA carboxylase is a heterohexamer composed of biotin carboxyl carrier protein, biotin carboxylase and 2 subunits each of ACCase subunit alpha and ACCase plastid-coded subunit beta (accD). Zn(2+) serves as cofactor.

Its subcellular location is the plastid. It is found in the chloroplast stroma. The enzyme catalyses N(6)-carboxybiotinyl-L-lysyl-[protein] + acetyl-CoA = N(6)-biotinyl-L-lysyl-[protein] + malonyl-CoA. It functions in the pathway lipid metabolism; malonyl-CoA biosynthesis; malonyl-CoA from acetyl-CoA: step 1/1. Functionally, component of the acetyl coenzyme A carboxylase (ACC) complex. Biotin carboxylase (BC) catalyzes the carboxylation of biotin on its carrier protein (BCCP) and then the CO(2) group is transferred by the transcarboxylase to acetyl-CoA to form malonyl-CoA. The polypeptide is Acetyl-coenzyme A carboxylase carboxyl transferase subunit beta, chloroplastic (Lemna minor (Common duckweed)).